The chain runs to 79 residues: D-alanyl carrier protein (79 aa).

The region spanning 1-77 is the Carrier domain; that stretch reads MTVEEKIIDA…KIVEGVKELQ (77 aa). S35 carries the O-(pantetheine 4'-phosphoryl)serine modification.

The protein belongs to the DltC family. Post-translationally, 4'-phosphopantetheine is transferred from CoA to a specific serine of apo-DCP.

The protein localises to the cytoplasm. It functions in the pathway cell wall biogenesis; lipoteichoic acid biosynthesis. Carrier protein involved in the D-alanylation of lipoteichoic acid (LTA). The loading of thioester-linked D-alanine onto DltC is catalyzed by D-alanine--D-alanyl carrier protein ligase DltA. The DltC-carried D-alanyl group is further transferred to cell membrane phosphatidylglycerol (PG) by forming an ester bond, probably catalyzed by DltD. D-alanylation of LTA plays an important role in modulating the properties of the cell wall in Gram-positive bacteria, influencing the net charge of the cell wall. The polypeptide is D-alanyl carrier protein (Streptococcus uberis (strain ATCC BAA-854 / 0140J)).